Here is a 967-residue protein sequence, read N- to C-terminus: Phosphoenolpyruvate carboxylase (967 aa).

Phosphoserine is present on serine 11. Catalysis depends on residues histidine 172 and lysine 601.

The protein belongs to the PEPCase type 1 family. In terms of assembly, homotetramer. Requires Mg(2+) as cofactor.

It is found in the cytoplasm. It catalyses the reaction oxaloacetate + phosphate = phosphoenolpyruvate + hydrogencarbonate. The protein operates within photosynthesis; C3 acid pathway. By light-reversible phosphorylation. Through the carboxylation of phosphoenolpyruvate (PEP) it forms oxaloacetate, a four-carbon dicarboxylic acid source for the tricarboxylic acid cycle. The chain is Phosphoenolpyruvate carboxylase (PPCA1) from Flaveria pringlei.